Here is a 527-residue protein sequence, read N- to C-terminus: Peptide chain release factor 3 (527 aa).

Residues 9–277 (AKRRTFAIIS…AVVDWAPRPL (269 aa)) form the tr-type G domain. Residues 18 to 25 (SHPDAGKT), 86 to 90 (DTPGH), and 140 to 143 (NKLD) contribute to the GTP site.

It belongs to the TRAFAC class translation factor GTPase superfamily. Classic translation factor GTPase family. PrfC subfamily.

The protein localises to the cytoplasm. In terms of biological role, increases the formation of ribosomal termination complexes and stimulates activities of RF-1 and RF-2. It binds guanine nucleotides and has strong preference for UGA stop codons. It may interact directly with the ribosome. The stimulation of RF-1 and RF-2 is significantly reduced by GTP and GDP, but not by GMP. This chain is Peptide chain release factor 3, found in Pseudomonas putida (strain W619).